The chain runs to 524 residues: Probable myosin-binding protein 5 (524 aa).

Residues Phe-20 to Leu-40 form a helical membrane-spanning segment. The GTD-binding domain maps to Ser-299–Arg-397. Residues Ser-462 to Gln-490 adopt a coiled-coil conformation.

The protein resides in the membrane. Probable membrane-anchored myosin receptors. The sequence is that of Probable myosin-binding protein 5 from Arabidopsis thaliana (Mouse-ear cress).